Reading from the N-terminus, the 800-residue chain is Fibroblast growth factor receptor 4 (800 aa).

The signal sequence occupies residues 1 to 16 (MWLLLALLSIFQETPA). Ig-like C2-type domains are found at residues 17–115 (FSLE…LIMD), 148–236 (PQRM…YLLD), and 245–345 (PILQ…AWLT). At 17-367 (FSLEASEEME…TATSEARYTD (351 aa)) the chain is on the extracellular side. A disulfide bridge links cysteine 54 with cysteine 98. N-linked (GlcNAc...) asparagine glycosylation occurs at asparagine 109. Cysteine 168 and cysteine 220 are oxidised to a cystine. N-linked (GlcNAc...) asparagine glycosylation is found at asparagine 254, asparagine 286, and asparagine 307. Cysteine 267 and cysteine 329 are joined by a disulfide. Residues 368–388 (IILYVSGSLALVLLLLLAGVY) traverse the membrane as a helical segment. The Cytoplasmic segment spans residues 389 to 800 (HRQAIHGHHS…PFPFPEAQTT (412 aa)). Residues 465-753 (LVLGKPLGEG…VLLAVSEEYL (289 aa)) enclose the Protein kinase domain. Residues 471 to 479 (LGEGCFGQV) and lysine 501 each bind ATP. Position 571 is a phosphoserine (serine 571). Aspartate 610 (proton acceptor) is an active-site residue. Residues tyrosine 640, tyrosine 641, and tyrosine 752 each carry the phosphotyrosine; by autocatalysis modification. The segment at 768-800 (DASSTCSSSDSVFSHDPLPLEPSPFPFPEAQTT) is disordered. The span at 770-781 (SSTCSSSDSVFS) shows a compositional bias: low complexity.

Belongs to the protein kinase superfamily. Tyr protein kinase family. Fibroblast growth factor receptor subfamily. As to quaternary structure, monomer. Homodimer after ligand binding. Interacts with FGF1, FGF2, FGF4, FGF6, FGF8, FGF9, FGF16, FGF17, FGF18, FGF19, FGF21 and FGF23 (in vitro). Binding affinity for FGF family members is enhanced by interactions between FGFs and heparan sulfate proteoglycans. Interacts with KLB; this strongly increases the affinity for FGF19 and FGF23. Affinity for FGF19 is strongly increased by KLB and sulfated glycosaminoglycans. KLB and KL both interact with the core-glycosylated FGFR4 in the endoplasmic reticulum and promote its degradation, so that only FGFR4 with fully mature N-glycans is expressed at the cell surface. Identified in a complex with NCAM1, CDH2, PLCG1, FRS2, SRC, SHC1, GAP43 and CTTN. Interacts with MMP14 and HIP1. Interacts with STAT3. Post-translationally, N-glycosylated. Full maturation of the glycan chains in the Golgi is essential for high affinity interaction with FGF19. In terms of processing, ubiquitinated. Subject to proteasomal degradation when not fully glycosylated. Autophosphorylated. Binding of FGF family members together with heparan sulfate proteoglycan or heparin promotes receptor dimerization and autophosphorylation on tyrosine residues. Autophosphorylation occurs in trans between the two FGFR molecules present in the dimer.

It is found in the cell membrane. The protein resides in the endosome. Its subcellular location is the endoplasmic reticulum. It catalyses the reaction L-tyrosyl-[protein] + ATP = O-phospho-L-tyrosyl-[protein] + ADP + H(+). Its activity is regulated as follows. Present in an inactive conformation in the absence of bound ligand. Ligand binding leads to dimerization and activation by autophosphorylation on tyrosine residues. Tyrosine-protein kinase that acts as a cell-surface receptor for fibroblast growth factors and plays a role in the regulation of cell proliferation, differentiation and migration, and in regulation of lipid metabolism, bile acid biosynthesis, glucose uptake, vitamin D metabolism and phosphate homeostasis. Required for normal down-regulation of the expression of CYP7A1, the rate-limiting enzyme in bile acid synthesis, in response to FGF19. Phosphorylates PLCG1 and FRS2. Ligand binding leads to the activation of several signaling cascades. Activation of PLCG1 leads to the production of the cellular signaling molecules diacylglycerol and inositol 1,4,5-trisphosphate. Phosphorylation of FRS2 triggers recruitment of GRB2, GAB1, PIK3R1 and SOS1, and mediates activation of RAS, MAPK1/ERK2, MAPK3/ERK1 and the MAP kinase signaling pathway, as well as of the AKT1 signaling pathway. Promotes SRC-dependent phosphorylation of the matrix protease MMP14 and its lysosomal degradation. FGFR4 signaling is down-regulated by receptor internalization and degradation; MMP14 promotes internalization and degradation of FGFR4. This is Fibroblast growth factor receptor 4 (Fgfr4) from Rattus norvegicus (Rat).